The following is a 422-amino-acid chain: Histidine--tRNA ligase (422 aa).

The protein belongs to the class-II aminoacyl-tRNA synthetase family. Homodimer.

It localises to the cytoplasm. The enzyme catalyses tRNA(His) + L-histidine + ATP = L-histidyl-tRNA(His) + AMP + diphosphate + H(+). The sequence is that of Histidine--tRNA ligase from Vibrio parahaemolyticus serotype O3:K6 (strain RIMD 2210633).